The chain runs to 396 residues: 8-amino-7-oxononanoate synthase (396 aa).

Arg-29 contributes to the substrate binding site. Position 116-117 (116-117 (GY)) interacts with pyridoxal 5'-phosphate. His-141 is a binding site for substrate. 3 residues coordinate pyridoxal 5'-phosphate: Ser-187, His-215, and Thr-243. An N6-(pyridoxal phosphate)lysine modification is found at Lys-246. Thr-360 contributes to the substrate binding site.

This sequence belongs to the class-II pyridoxal-phosphate-dependent aminotransferase family. BioF subfamily. Homodimer. The cofactor is pyridoxal 5'-phosphate.

The enzyme catalyses 6-carboxyhexanoyl-[ACP] + L-alanine + H(+) = (8S)-8-amino-7-oxononanoate + holo-[ACP] + CO2. The protein operates within cofactor biosynthesis; biotin biosynthesis. Functionally, catalyzes the decarboxylative condensation of pimeloyl-[acyl-carrier protein] and L-alanine to produce 8-amino-7-oxononanoate (AON), [acyl-carrier protein], and carbon dioxide. This chain is 8-amino-7-oxononanoate synthase, found in Nitrosospira multiformis (strain ATCC 25196 / NCIMB 11849 / C 71).